A 97-amino-acid chain; its full sequence is Large ribosomal subunit protein uL23 (97 aa).

It belongs to the universal ribosomal protein uL23 family. Part of the 50S ribosomal subunit. Contacts protein L29, and trigger factor when it is bound to the ribosome.

In terms of biological role, one of the early assembly proteins it binds 23S rRNA. One of the proteins that surrounds the polypeptide exit tunnel on the outside of the ribosome. Forms the main docking site for trigger factor binding to the ribosome. The sequence is that of Large ribosomal subunit protein uL23 from Anaeromyxobacter dehalogenans (strain 2CP-C).